A 247-amino-acid chain; its full sequence is METFKSILHEAQRIVVLTGAGMSTESGIPDFRSAGGIWTEDASRMEAMSLDYFLSYPRLFWPKFKELFQMKMSGSFEPNEGHLLLAELEKQGKQVDIFTQNIDGLHKKAGSRHVYELHGSIQTAACPACGARYDLPHLLEREVPECTAAGNNGDICGTVLKTDVVLFGDAVMHFDTLYEKLDQADLLLVIGTSLEVAPARFVPEDASLIPGMKKVIINLEPTYCDSLFDMVIHQKIGEFARSLGMKK.

One can recognise a Deacetylase sirtuin-type domain in the interval methionine 1 to lysine 247. Residues alanine 20, threonine 24, phenylalanine 31, arginine 32, glutamine 100, isoleucine 102, aspartate 103, and histidine 118 each contribute to the NAD(+) site. Phenylalanine 31 serves as a coordination point for nicotinamide. Nicotinamide contacts are provided by isoleucine 102 and aspartate 103. The active-site Proton acceptor is histidine 118. Zn(2+) is bound by residues cysteine 126, cysteine 129, cysteine 146, and cysteine 156. Threonine 192, serine 193, asparagine 218, and isoleucine 236 together coordinate NAD(+).

This sequence belongs to the sirtuin family. Class U subfamily. Zn(2+) is required as a cofactor.

The protein resides in the cytoplasm. It catalyses the reaction N(6)-acetyl-L-lysyl-[protein] + NAD(+) + H2O = 2''-O-acetyl-ADP-D-ribose + nicotinamide + L-lysyl-[protein]. In terms of biological role, NAD-dependent protein deacetylase which modulates the activities of several enzymes which are inactive in their acetylated form. In Bacillus subtilis (strain 168), this protein is NAD-dependent protein deacetylase.